A 182-amino-acid chain; its full sequence is Putative manganese efflux pump MntP (182 aa).

Transmembrane regions (helical) follow at residues 7-27 (IISI…VSLG), 38-58 (IAYI…AGML), 71-91 (TSFA…FSAF), 106-126 (LWII…GLGI), 131-151 (IFVT…LGML), and 159-179 (FLGV…GIFI).

The protein belongs to the MntP (TC 9.B.29) family.

The protein resides in the cell membrane. In terms of biological role, probably functions as a manganese efflux pump. This Oceanobacillus iheyensis (strain DSM 14371 / CIP 107618 / JCM 11309 / KCTC 3954 / HTE831) protein is Putative manganese efflux pump MntP.